Reading from the N-terminus, the 442-residue chain is Proline--tRNA ligase (442 aa).

It belongs to the class-II aminoacyl-tRNA synthetase family. ProS type 2 subfamily. As to quaternary structure, homodimer.

The protein resides in the cytoplasm. The catalysed reaction is tRNA(Pro) + L-proline + ATP = L-prolyl-tRNA(Pro) + AMP + diphosphate. In terms of biological role, catalyzes the attachment of proline to tRNA(Pro) in a two-step reaction: proline is first activated by ATP to form Pro-AMP and then transferred to the acceptor end of tRNA(Pro). This chain is Proline--tRNA ligase, found in Sinorhizobium medicae (strain WSM419) (Ensifer medicae).